The primary structure comprises 670 residues: Transketolase, plasmid (670 aa).

His32 lines the substrate pocket. Residues His72 and 120–122 (GPL) contribute to the thiamine diphosphate site. Residue Asp161 participates in Mg(2+) binding. Gly162 and Asn191 together coordinate thiamine diphosphate. Mg(2+)-binding residues include Asn191 and Ile193. Substrate is bound by residues His267, Arg364, and Ser391. His267 provides a ligand contact to thiamine diphosphate. Residue Glu417 is the Proton donor of the active site. Thiamine diphosphate is bound at residue Phe443. Residues His467, Asp475, and Arg526 each coordinate substrate.

This sequence belongs to the transketolase family. In terms of assembly, homodimer. Requires Mg(2+) as cofactor. It depends on Ca(2+) as a cofactor. Mn(2+) is required as a cofactor. The cofactor is Co(2+). Thiamine diphosphate serves as cofactor.

The catalysed reaction is D-sedoheptulose 7-phosphate + D-glyceraldehyde 3-phosphate = aldehydo-D-ribose 5-phosphate + D-xylulose 5-phosphate. It participates in carbohydrate biosynthesis; Calvin cycle. Catalyzes the transfer of a two-carbon ketol group from a ketose donor to an aldose acceptor, via a covalent intermediate with the cofactor thiamine pyrophosphate. This Cupriavidus necator (strain ATCC 17699 / DSM 428 / KCTC 22496 / NCIMB 10442 / H16 / Stanier 337) (Ralstonia eutropha) protein is Transketolase, plasmid (cbbTP).